A 147-amino-acid polypeptide reads, in one-letter code: uncharacterized protein (147 aa).

The chain crosses the membrane as a helical span at residues 3 to 23 (APMVGMVVLVVTLGAAVLALS).

This sequence to M.tuberculosis Rv1312.

The protein resides in the membrane. This is an uncharacterized protein from Mycobacterium leprae (strain TN).